We begin with the raw amino-acid sequence, 385 residues long: Serpin-Z10 (385 aa).

The RCL stretch occupies residues 333-357; sequence GTEAAAVSVGVVSCTSFRRNPDFVA.

It belongs to the serpin family.

In terms of biological role, probable serine protease inhibitor. This Arabidopsis thaliana (Mouse-ear cress) protein is Serpin-Z10.